The following is a 955-amino-acid chain: Kinesin-like protein KIN-14L (955 aa).

Residues 19–140 (AARRFQAVQW…CILGLKAYHE (122 aa)) enclose the Calponin-homology (CH) domain. In terms of domain architecture, Kinesin motor spans 363–685 (NIRVYCRVRP…LKFAQRVSTV (323 aa)). An ATP-binding site is contributed by 445-452 (GQTGSGKT). The stretch at 692–719 (AHKETREVMHLKEQIENLKRALGTEEWN) forms a coiled coil. The disordered stretch occupies residues 878-942 (RKENIPADPR…GKPIENGKKD (65 aa)). Residues 894–916 (NNFSHIKSPDTSNAKTMRRQSLT) show a composition bias toward polar residues.

Belongs to the TRAFAC class myosin-kinesin ATPase superfamily. Kinesin family. KIN-14 subfamily.

The protein is Kinesin-like protein KIN-14L of Arabidopsis thaliana (Mouse-ear cress).